The sequence spans 394 residues: Gastricsin (394 aa).

The signal sequence occupies residues 1–16; the sequence is MKWMVVVLLCLPLLEA. Residues 17–65 constitute a propeptide, activation peptide; sequence TQIKVPLKKIKSIREVLREKGLLGDFLKNHKPQHARKFFRNRLAKTGDF. Residues 79–391 form the Peptidase A1 domain; the sequence is YFGQISLGTP…DLANNRVGFA (313 aa). The active site involves aspartate 97. Intrachain disulfides connect cysteine 110/cysteine 115 and cysteine 273/cysteine 277. Residue threonine 283 is part of the active site. The cysteines at positions 316 and 349 are disulfide-linked.

This sequence belongs to the peptidase A1 family.

Its subcellular location is the secreted. It carries out the reaction More restricted specificity than pepsin A, but shows preferential cleavage at Tyr-|-Xaa bonds. High activity on hemoglobin.. Its function is as follows. Hydrolyzes a variety of proteins. The protein is Gastricsin (PGC) of Cavia porcellus (Guinea pig).